The following is a 239-amino-acid chain: Ribonuclease 3 (239 aa).

One can recognise an RNase III domain in the interval 12–137 (RARLETAIGY…LIAAIYLDGG (126 aa)). Mg(2+) is bound at residue Glu-50. Asp-54 is an active-site residue. Positions 123 and 126 each coordinate Mg(2+). Residue Glu-126 is part of the active site. Residues 162–231 (DAKTELQEWA…AMRLLEREGV (70 aa)) form the DRBM domain.

Belongs to the ribonuclease III family. As to quaternary structure, homodimer. Mg(2+) serves as cofactor.

The protein resides in the cytoplasm. It carries out the reaction Endonucleolytic cleavage to 5'-phosphomonoester.. In terms of biological role, digests double-stranded RNA. Involved in the processing of primary rRNA transcript to yield the immediate precursors to the large and small rRNAs (23S and 16S). Processes some mRNAs, and tRNAs when they are encoded in the rRNA operon. Processes pre-crRNA and tracrRNA of type II CRISPR loci if present in the organism. In Sinorhizobium fredii (strain NBRC 101917 / NGR234), this protein is Ribonuclease 3.